We begin with the raw amino-acid sequence, 107 residues long: Nucleoid-associated protein GbCGDNIH1_0260 (107 aa).

It belongs to the YbaB/EbfC family. Homodimer.

It localises to the cytoplasm. The protein resides in the nucleoid. Binds to DNA and alters its conformation. May be involved in regulation of gene expression, nucleoid organization and DNA protection. The protein is Nucleoid-associated protein GbCGDNIH1_0260 of Granulibacter bethesdensis (strain ATCC BAA-1260 / CGDNIH1).